A 377-amino-acid chain; its full sequence is Virion membrane protein A16 (377 aa).

Gly2 carries N-myristoyl glycine; by host lipidation. Topologically, residues 2-341 (GAAVTLNRIK…VVKDKIKLPT (340 aa)) are virion surface. Residues 342–362 (WLGAAITLVVISVIFYFISIY) form a helical; Signal-anchor for type II membrane protein membrane-spanning segment. Over 363–377 (SRTKIKTNDINVRRR) the chain is Intravirion.

This sequence belongs to the poxviridae A16/G9/J5 family. In terms of assembly, part of a stable entry-fusion complex (EFC) which is at least composed of proteins A16, A21, A28, G3, G9, H2, J5, and L5. Formation of the viral membrane is necessary for the assembly of the complex. Interacts with G9. Post-translationally, most cysteines are linked by disulfide bonds. They are created by the viral disulfide bond formation pathway, a poxvirus-specific redox pathway that operates on the cytoplasmic side of the MV membranes.

Its subcellular location is the virion membrane. Envelope protein part of the entry-fusion complex responsible for the virus membrane fusion with host cell membrane during virus entry. Also plays a role in cell-cell fusion (syncytium formation). This Homo sapiens (Human) protein is Virion membrane protein A16.